The primary structure comprises 89 residues: MAQQQSEIRYLTPPSVDVKKKKYCRFKKSGIKYIDYKDPEFLKKFLNEQGKILPRRITGTSLKFQRRIAQAVKRARHLALLPFVTDMMK.

This sequence belongs to the bacterial ribosomal protein bS18 family. Part of the 30S ribosomal subunit. Forms a tight heterodimer with protein bS6.

Binds as a heterodimer with protein bS6 to the central domain of the 16S rRNA, where it helps stabilize the platform of the 30S subunit. The sequence is that of Small ribosomal subunit protein bS18 from Phocaeicola vulgatus (strain ATCC 8482 / DSM 1447 / JCM 5826 / CCUG 4940 / NBRC 14291 / NCTC 11154) (Bacteroides vulgatus).